The chain runs to 375 residues: Queuine tRNA-ribosyltransferase (375 aa).

The Proton acceptor role is filled by D89. Substrate is bound by residues 89 to 93 (DSGGF), D143, Q187, and G214. The tract at residues 245–251 (GVGKPED) is RNA binding. Residue D264 is the Nucleophile of the active site. The segment at 269–273 (TRNAR) is RNA binding; important for wobble base 34 recognition. Positions 302, 304, 307, and 333 each coordinate Zn(2+).

It belongs to the queuine tRNA-ribosyltransferase family. As to quaternary structure, homodimer. Within each dimer, one monomer is responsible for RNA recognition and catalysis, while the other monomer binds to the replacement base PreQ1. Requires Zn(2+) as cofactor.

It carries out the reaction 7-aminomethyl-7-carbaguanine + guanosine(34) in tRNA = 7-aminomethyl-7-carbaguanosine(34) in tRNA + guanine. It participates in tRNA modification; tRNA-queuosine biosynthesis. Catalyzes the base-exchange of a guanine (G) residue with the queuine precursor 7-aminomethyl-7-deazaguanine (PreQ1) at position 34 (anticodon wobble position) in tRNAs with GU(N) anticodons (tRNA-Asp, -Asn, -His and -Tyr). Catalysis occurs through a double-displacement mechanism. The nucleophile active site attacks the C1' of nucleotide 34 to detach the guanine base from the RNA, forming a covalent enzyme-RNA intermediate. The proton acceptor active site deprotonates the incoming PreQ1, allowing a nucleophilic attack on the C1' of the ribose to form the product. After dissociation, two additional enzymatic reactions on the tRNA convert PreQ1 to queuine (Q), resulting in the hypermodified nucleoside queuosine (7-(((4,5-cis-dihydroxy-2-cyclopenten-1-yl)amino)methyl)-7-deazaguanosine). This chain is Queuine tRNA-ribosyltransferase, found in Salmonella choleraesuis (strain SC-B67).